The following is an 825-amino-acid chain: Thioredoxin domain-containing protein 16 (825 aa).

The signal sequence occupies residues 1 to 27 (MFSGFNVFRVGISFVIMCIFYMPTVNS). The 104-residue stretch at 392–495 (LTVELTEETF…EDLLKFIQLN (104 aa)) folds into the Thioredoxin domain. Cys449 and Cys456 are oxidised to a cystine. Residue Asn460 is glycosylated (N-linked (GlcNAc...) asparagine). The segment at 762 to 787 (RKVPKCMKETDVQENDKEQHEDKSAV) is disordered. Positions 767-787 (CMKETDVQENDKEQHEDKSAV) are enriched in basic and acidic residues. The Mediates endoplasmic reticulum retention motif lies at 816–819 (DKEL).

Interacts with FOXRED2. Post-translationally, glycosylated.

The protein localises to the secreted. Its subcellular location is the endoplasmic reticulum lumen. The sequence is that of Thioredoxin domain-containing protein 16 from Homo sapiens (Human).